We begin with the raw amino-acid sequence, 541 residues long: MNALVDQLKSTAAASKATDIRAAFAADPKRFSRFSASFDDLLMDYSKTAVNDEILTLLEKLATEGGVAAKREEMFSGVAINFTEDRAVLHTALRNRSNTPVLVDGKDVMPDVNGVLAAMGKFADGIRSGTLKGATGKAITDVINIGIGGSDLGPVMATLALAPFHDGPRSYFVSNIDGAHIADILKLVSPETTLFIIASKTFTTIETMTNAQTARNFIAKALGEAAVQHHFAAVSTALDKVAAFGIDSARVFGFWDWVGGRYSIWSAIGLPLMIAVGPENFGKFLDGAHAMDNHFRKAPFKENLPMLLGLIGFYHRNVLGYTTRAILPYDQRLSRFPAYLQQLDMESNGKGVTIDGTPVEGNSGPVVWGEPGTNGQHAFYQLIHQGTSIIPAEFMIAANGFEPDLRHQHELLIANCLAQSEALMKGRTFEEAKAQLTSKGMDDKKADFIAPHRVFTGNRPSITFVYDKLTPFALGRLIALYEHRVFVEGVLFRINSFDQWGVELGKELATGLLPVVEGKESAAGHDSSTQGLVAALSKLEK.

The active-site Proton donor is the glutamate 346. Residues histidine 377 and lysine 506 contribute to the active site.

Belongs to the GPI family.

The protein localises to the cytoplasm. It carries out the reaction alpha-D-glucose 6-phosphate = beta-D-fructose 6-phosphate. It functions in the pathway carbohydrate biosynthesis; gluconeogenesis. It participates in carbohydrate degradation; glycolysis; D-glyceraldehyde 3-phosphate and glycerone phosphate from D-glucose: step 2/4. Functionally, catalyzes the reversible isomerization of glucose-6-phosphate to fructose-6-phosphate. This is Glucose-6-phosphate isomerase from Rhizobium rhizogenes (strain K84 / ATCC BAA-868) (Agrobacterium radiobacter).